Consider the following 127-residue polypeptide: Protein ApaG (127 aa).

Positions 3-127 (EGKKYEIAVK…FILSVPRILH (125 aa)) constitute an ApaG domain.

The protein is Protein ApaG of Nitrosospira multiformis (strain ATCC 25196 / NCIMB 11849 / C 71).